The chain runs to 177 residues: R-phycoerythrin beta chain (177 aa).

Asparagine 35 and aspartate 39 together coordinate (2R,3E)-phycoerythrobilin. Phycourobilin contacts are provided by cysteine 50, aspartate 54, and cysteine 61. (2R,3E)-phycoerythrobilin-binding positions include asparagine 72, 77–78 (RR), cysteine 82, and 84–85 (RD). The residue at position 72 (asparagine 72) is an N4-methylasparagine. 147–148 (SQ) provides a ligand contact to phycourobilin. Positions 154 and 158 each coordinate (2R,3E)-phycoerythrobilin.

This sequence belongs to the phycobiliprotein family. Heterododecamer of 6 alpha and 6 beta chains. The basic functional unit of phycobiliproteins is a ring-shaped hexamer formed from two back-to-back trimers contacting via the alpha chain subunits. The trimers are composed of alpha/beta subunit heterodimers arranged around a three-fold axis of symmetry. The phycoerythrins also contain a gamma subunit which is located in the center of the hexamer. Contains two covalently linked phycoerythrobilin chromophores and one covalently linked phycourobilin chromophore.

The protein localises to the plastid. It is found in the chloroplast thylakoid membrane. Functionally, light-harvesting photosynthetic tetrapyrrole chromophore-protein from the phycobiliprotein complex. This is R-phycoerythrin beta chain (rpeB) from Agarophyton chilense (Red seaweed).